Consider the following 557-residue polypeptide: Dihydroxy-acid dehydratase (557 aa).

Cys-50 contributes to the [2Fe-2S] cluster binding site. Asp-82 lines the Mg(2+) pocket. [2Fe-2S] cluster is bound at residue Cys-123. Residues Asp-124 and Lys-125 each contribute to the Mg(2+) site. Lys-125 bears the N6-carboxylysine mark. Position 195 (Cys-195) interacts with [2Fe-2S] cluster. A Mg(2+)-binding site is contributed by Glu-447. The active-site Proton acceptor is the Ser-473.

The protein belongs to the IlvD/Edd family. Homodimer. Requires [2Fe-2S] cluster as cofactor. It depends on Mg(2+) as a cofactor.

The enzyme catalyses (2R)-2,3-dihydroxy-3-methylbutanoate = 3-methyl-2-oxobutanoate + H2O. The catalysed reaction is (2R,3R)-2,3-dihydroxy-3-methylpentanoate = (S)-3-methyl-2-oxopentanoate + H2O. It participates in amino-acid biosynthesis; L-isoleucine biosynthesis; L-isoleucine from 2-oxobutanoate: step 3/4. The protein operates within amino-acid biosynthesis; L-valine biosynthesis; L-valine from pyruvate: step 3/4. Functions in the biosynthesis of branched-chain amino acids. Catalyzes the dehydration of (2R,3R)-2,3-dihydroxy-3-methylpentanoate (2,3-dihydroxy-3-methylvalerate) into 2-oxo-3-methylpentanoate (2-oxo-3-methylvalerate) and of (2R)-2,3-dihydroxy-3-methylbutanoate (2,3-dihydroxyisovalerate) into 2-oxo-3-methylbutanoate (2-oxoisovalerate), the penultimate precursor to L-isoleucine and L-valine, respectively. The protein is Dihydroxy-acid dehydratase of Nitrosospira multiformis (strain ATCC 25196 / NCIMB 11849 / C 71).